Reading from the N-terminus, the 99-residue chain is Small ribosomal subunit protein uS19c (99 aa).

This sequence belongs to the universal ribosomal protein uS19 family.

It localises to the plastid. The protein resides in the chloroplast. Its function is as follows. Protein S19 forms a complex with S13 that binds strongly to the 16S ribosomal RNA. In Oenothera biennis (German evening primrose), this protein is Small ribosomal subunit protein uS19c.